The sequence spans 414 residues: Serine hydroxymethyltransferase (414 aa).

(6S)-5,6,7,8-tetrahydrofolate-binding positions include L116 and 120-122 (GHL). At K224 the chain carries N6-(pyridoxal phosphate)lysine. (6S)-5,6,7,8-tetrahydrofolate is bound by residues E240 and 348–350 (SPF).

Belongs to the SHMT family. As to quaternary structure, homodimer. Requires pyridoxal 5'-phosphate as cofactor.

It localises to the cytoplasm. It carries out the reaction (6R)-5,10-methylene-5,6,7,8-tetrahydrofolate + glycine + H2O = (6S)-5,6,7,8-tetrahydrofolate + L-serine. The protein operates within one-carbon metabolism; tetrahydrofolate interconversion. It participates in amino-acid biosynthesis; glycine biosynthesis; glycine from L-serine: step 1/1. Catalyzes the reversible interconversion of serine and glycine with tetrahydrofolate (THF) serving as the one-carbon carrier. This reaction serves as the major source of one-carbon groups required for the biosynthesis of purines, thymidylate, methionine, and other important biomolecules. Also exhibits THF-independent aldolase activity toward beta-hydroxyamino acids, producing glycine and aldehydes, via a retro-aldol mechanism. The polypeptide is Serine hydroxymethyltransferase (Campylobacter jejuni subsp. jejuni serotype O:2 (strain ATCC 700819 / NCTC 11168)).